The following is a 299-amino-acid chain: Adenylate kinase (299 aa).

The tract at residues 1-30 (MATTTTRGARDSPFPAPSEGEIKKELNMKG) is disordered. Position 85-90 (85-90 (GAGKGT)) interacts with ATP. Positions 107–136 (ATGDMLREQVSKQTELGKMAKKIMDQGGLV) are NMP. Residues threonine 108, arginine 113, 134-136 (GLV), 163-166 (GFPR), and glutamine 170 each bind AMP. The segment at 204–241 (GRLVHPASGRSYHKEFSPPKKPMTDDVTGEPLIQRSDD) is LID. ATP contacts are provided by residues arginine 205 and 214–215 (SY). A disordered region spans residues 212 to 237 (GRSYHKEFSPPKKPMTDDVTGEPLIQ). Residues 215–227 (YHKEFSPPKKPMT) are compositionally biased toward basic and acidic residues. The AMP site is built by arginine 238 and arginine 249. Residue glutamine 277 participates in ATP binding.

This sequence belongs to the adenylate kinase family. AK2 subfamily. As to quaternary structure, monomer.

Its subcellular location is the cytoplasm. It localises to the cytosol. The protein resides in the mitochondrion intermembrane space. It carries out the reaction AMP + ATP = 2 ADP. In terms of biological role, catalyzes the reversible transfer of the terminal phosphate group between ATP and AMP. Plays an important role in cellular energy homeostasis and in adenine nucleotide metabolism. Adenylate kinase activity is critical for regulation of the phosphate utilization and the AMP de novo biosynthesis pathways. This is Adenylate kinase from Mycosarcoma maydis (Corn smut fungus).